The sequence spans 427 residues: 3-phosphoshikimate 1-carboxyvinyltransferase (427 aa).

Positions 22, 23, and 27 each coordinate 3-phosphoshikimate. Lysine 22 serves as a coordination point for phosphoenolpyruvate. Phosphoenolpyruvate is bound by residues glycine 96 and arginine 124. Serine 169, serine 170, glutamine 171, serine 197, aspartate 313, asparagine 336, and lysine 340 together coordinate 3-phosphoshikimate. Glutamine 171 contributes to the phosphoenolpyruvate binding site. Aspartate 313 serves as the catalytic Proton acceptor. Arginine 344, arginine 386, and lysine 411 together coordinate phosphoenolpyruvate.

This sequence belongs to the EPSP synthase family. In terms of assembly, monomer.

The protein resides in the cytoplasm. It carries out the reaction 3-phosphoshikimate + phosphoenolpyruvate = 5-O-(1-carboxyvinyl)-3-phosphoshikimate + phosphate. It functions in the pathway metabolic intermediate biosynthesis; chorismate biosynthesis; chorismate from D-erythrose 4-phosphate and phosphoenolpyruvate: step 6/7. Catalyzes the transfer of the enolpyruvyl moiety of phosphoenolpyruvate (PEP) to the 5-hydroxyl of shikimate-3-phosphate (S3P) to produce enolpyruvyl shikimate-3-phosphate and inorganic phosphate. In Salmonella arizonae (strain ATCC BAA-731 / CDC346-86 / RSK2980), this protein is 3-phosphoshikimate 1-carboxyvinyltransferase.